The following is a 500-amino-acid chain: Protein DETOXIFICATION 24 (500 aa).

Residues 1–20 are disordered; the sequence is MSTQEEMEERLLREGSDAEG. 12 consecutive transmembrane segments (helical) span residues 48–67, 72–92, 124–144, 160–180, 188–208, 225–245, 266–286, 298–318, 342–362, 384–404, 411–431, and 441–461; these read SSLFRMTSFGSIIVAQAFIG, LGLAAYALLQSTFIRFLYGLM, IVDMAVTTLFLPFIVLAGPIL, IYPWMIPYVYSLIFTMTIQMY, AIVGVLSTLSLALDLVVTWWC, VGSWAMVLAEFVYIFGGWCPF, ISSGFMICLEYWYMSILVLMA, AFSICQYIYTWELNICLGFLG, VILTISTLMGVIFSALCLAFC, VILAVSILLNSIQPILSGVAV, IVAVVNLASYYAIGIPLGLIL, and GLWSGMLAGIAIQTIILCYII.

Belongs to the multi antimicrobial extrusion (MATE) (TC 2.A.66.1) family.

The protein localises to the membrane. The chain is Protein DETOXIFICATION 24 from Arabidopsis thaliana (Mouse-ear cress).